Reading from the N-terminus, the 164-residue chain is HTH-type transcriptional regulator IscR (164 aa).

The 130-residue stretch at arginine 2 to asparagine 131 folds into the HTH rrf2-type domain. Positions leucine 28–lysine 51 form a DNA-binding region, H-T-H motif. [2Fe-2S] cluster contacts are provided by cysteine 92, cysteine 98, and cysteine 104. A metal cation contacts are provided by cysteine 92, cysteine 98, and cysteine 104. The tract at residues aspartate 145–alanine 164 is disordered. Residues glycine 152 to alanine 164 show a composition bias toward polar residues.

Requires [2Fe-2S] cluster as cofactor.

In terms of biological role, regulates the transcription of several operons and genes involved in the biogenesis of Fe-S clusters and Fe-S-containing proteins. The polypeptide is HTH-type transcriptional regulator IscR (Serratia proteamaculans (strain 568)).